Consider the following 335-residue polypeptide: NADH-quinone oxidoreductase subunit H (335 aa).

The next 8 membrane-spanning stretches (helical) occupy residues 12 to 32, 81 to 101, 114 to 134, 154 to 174, 187 to 207, 238 to 258, 270 to 290, and 307 to 327; these read IIAV…GALL, VIFT…FAVI, IGLL…LFAG, VSYE…VGSF, LWFI…GVAV, FFVG…TLFF, SLAF…FILL, and WKFC…IVLL.

The protein belongs to the complex I subunit 1 family. NDH-1 is composed of 13 different subunits. Subunits NuoA, H, J, K, L, M, N constitute the membrane sector of the complex.

Its subcellular location is the cell inner membrane. The enzyme catalyses a quinone + NADH + 5 H(+)(in) = a quinol + NAD(+) + 4 H(+)(out). Functionally, NDH-1 shuttles electrons from NADH, via FMN and iron-sulfur (Fe-S) centers, to quinones in the respiratory chain. The immediate electron acceptor for the enzyme in this species is believed to be ubiquinone. Couples the redox reaction to proton translocation (for every two electrons transferred, four hydrogen ions are translocated across the cytoplasmic membrane), and thus conserves the redox energy in a proton gradient. This subunit may bind ubiquinone. The chain is NADH-quinone oxidoreductase subunit H from Pseudomonas syringae pv. syringae (strain B728a).